A 725-amino-acid chain; its full sequence is Lipoamidase (725 aa).

The disordered stretch occupies residues 1 to 52 (MLAQESILETTVQTETESVTTETSQTVANLESETTSQTVMQEKESSSAIAES). Over residues 9–27 (ETTVQTETESVTTETSQTV) the composition is skewed to low complexity. The segment covering 28 to 40 (ANLESETTSQTVM) has biased composition (polar residues). Catalysis depends on charge relay system residues K159 and S235. S259 (acyl-ester intermediate) is an active-site residue. The interval 551–686 (KINQPHVEEP…NKSMIGKQEQ (136 aa)) is disordered. Residues 556–637 (HVEEPDKDKE…TSEGPIEGKD (82 aa)) show a composition bias toward basic and acidic residues. Residues 650 to 661 (SGSSLDNSLNSS) show a composition bias toward low complexity. A compositionally biased stretch (polar residues) spans 662–679 (ANQGTKSTESTHAFSNKS). A helical membrane pass occupies residues 700-720 (PSTFWIVLGGAFLVTSGTIYI).

It belongs to the amidase family. As to quaternary structure, homodimer in solution.

The protein resides in the cell membrane. It carries out the reaction N(6)-[(R)-lipoyl]-L-lysyl-[lipoyl-carrier protein] + H2O = L-lysyl-[lipoyl-carrier protein] + (R)-lipoate. With respect to regulation, lipoamidase activity is slightly inhibited by p-chloromercuribenzoate. Functionally, amidohydrolase that releases lipoic acid from the protein-bound form. Cleaves the amide bond that links lipoic acid to the lipoylated lysine epsilon-amino groups, leading to the formation of free lipoic acid plus the unmodified protein. Shows activity toward both high molecular weight protein substrates such as a lipoyl domain and intact 2-oxoacid dehydrogenases as well as small molecule substrates such as lipoyl-lysine. Also acts on small biotinylated substrates. Hydrolyzes the synthetic substrates methyl lipoate and lipoamide. The physiologically important substrates are probably lipoyl-lysine and small peptides containing lipoyl-lysine. Lpa seems likely to enable this bacterium to utilize amide-linked forms of lipoic acid that otherwise could not be assimilated. This chain is Lipoamidase, found in Enterococcus faecalis (Streptococcus faecalis).